Consider the following 415-residue polypeptide: uncharacterized protein (415 aa).

This is an uncharacterized protein from Escherichia coli (strain K12).